The sequence spans 587 residues: L-ornithine N(5)-monooxygenase (587 aa).

Residues 53–61 and glutamine 72 each bind FAD; that span reads EKHTSFQWH. Residue lysine 77 participates in substrate binding. Residue 235–238 coordinates NADP(+); it reads GGQS. Substrate is bound by residues 282-285 and asparagine 312; that span reads NEVF. Residue 312–314 coordinates NADP(+); the sequence is NYS. Residues 488–511 form a disordered region; sequence DNSAASGVSGASTPLTSPSEEEGK. The span at 491–505 shows a compositional bias: polar residues; the sequence is AASGVSGASTPLTSP. An FAD-binding site is contributed by 567 to 569; the sequence is TLL. Serine 570 contributes to the substrate binding site.

The protein belongs to the lysine N(6)-hydroxylase/L-ornithine N(5)-oxygenase family. As to quaternary structure, homotetramer. Requires FAD as cofactor.

It catalyses the reaction L-ornithine + NADPH + O2 = N(5)-hydroxy-L-ornithine + NADP(+) + H2O. It carries out the reaction L-ornithine + NADH + O2 = N(5)-hydroxy-L-ornithine + NAD(+) + H2O. The protein operates within siderophore biosynthesis; ferrichrome biosynthesis. Functionally, L-ornithine N(5)-monooxygenase; part of the siderophore biosynthetic pathway. Omphalotus olearius produces ferrichrome A, but no other siderophore has been detected. Ferrichrome A consists of a hexapeptide ring made up of one glycine, two serine, and three N(5)-hydroxyornithine amino acid residues, the latter acylated by trans-(alpha-methyl)-glutaconic acid residues. The biosynthesis of ferrichrome A depends on the hydroxylation of ornithine to N(5)-hydroxyornithine, catalyzed by the monooxygenase omo1. The second step, the acylation of N(5)-hydroxy-L-ornithine is probably catalyzed by the N-acyltransferase ato1. Finally, assembly of ferrichrome A is catalyzed by the nonribosomal peptide synthase (NRPS) fso1. The protein is L-ornithine N(5)-monooxygenase of Omphalotus olearius (Jack o'lantern).